Reading from the N-terminus, the 363-residue chain is MKESVIRKLEGLLERNEEVLALLGDASVIADQDRFRALSKEYSQLEEVVAGFKAYQQAQADLDSAKEMLEEDDAEMREMAQEEMKAAKAELERLESELQILLLPKDPNDDTNAFIEIRAGAGGDEAAIFAGDLFRMYSRYAEANRWQMEVMSCNEGEHGGFKEIIVKVSGEGAYGKLKFESGGHRVQRVPETESQGRVHTSAVTVVVMHEVPEAEAISINPADLKVDTFRSSGAGGQHVNKTDSAIRITHIPTGIVVECQDQRSQHKNRAQAMSVLAARIQAVEDEKRRSAEESTRRSLVASGDRSERVRTYNFPQGRVSEHRINLTLYRLNEVMEGDLDAILTPLMQEHQADLLAALADEQG.

An N5-methylglutamine modification is found at Q237. Basic and acidic residues predominate over residues 284–296 (EDEKRRSAEESTR). The segment at 284–306 (EDEKRRSAEESTRRSLVASGDRS) is disordered.

This sequence belongs to the prokaryotic/mitochondrial release factor family. In terms of processing, methylated by PrmC. Methylation increases the termination efficiency of RF1.

It is found in the cytoplasm. Peptide chain release factor 1 directs the termination of translation in response to the peptide chain termination codons UAG and UAA. This Shewanella putrefaciens (strain CN-32 / ATCC BAA-453) protein is Peptide chain release factor 1.